Here is a 1118-residue protein sequence, read N- to C-terminus: Error-prone DNA polymerase (1118 aa).

Positions 1071 to 1118 (GPQPMGYAKEVGSDRRSRPEIGNAPARQDLATLSEEAEQVMPKGRNFQ) are disordered.

The protein belongs to the DNA polymerase type-C family. DnaE2 subfamily.

The protein resides in the cytoplasm. It carries out the reaction DNA(n) + a 2'-deoxyribonucleoside 5'-triphosphate = DNA(n+1) + diphosphate. Its function is as follows. DNA polymerase involved in damage-induced mutagenesis and translesion synthesis (TLS). It is not the major replicative DNA polymerase. In Mesorhizobium japonicum (strain LMG 29417 / CECT 9101 / MAFF 303099) (Mesorhizobium loti (strain MAFF 303099)), this protein is Error-prone DNA polymerase.